We begin with the raw amino-acid sequence, 152 residues long: Nucleoside diphosphate kinase (152 aa).

The ATP site is built by Lys-9, Phe-57, Arg-85, Thr-91, Arg-102, and Asn-112. The Pros-phosphohistidine intermediate role is filled by His-115.

The protein belongs to the NDK family. As to quaternary structure, homotetramer. Mg(2+) serves as cofactor.

The protein resides in the cytoplasm. The enzyme catalyses a 2'-deoxyribonucleoside 5'-diphosphate + ATP = a 2'-deoxyribonucleoside 5'-triphosphate + ADP. The catalysed reaction is a ribonucleoside 5'-diphosphate + ATP = a ribonucleoside 5'-triphosphate + ADP. Functionally, major role in the synthesis of nucleoside triphosphates other than ATP. The ATP gamma phosphate is transferred to the NDP beta phosphate via a ping-pong mechanism, using a phosphorylated active-site intermediate. The polypeptide is Nucleoside diphosphate kinase (Rhodopirellula baltica (strain DSM 10527 / NCIMB 13988 / SH1)).